The primary structure comprises 372 residues: MRANQPVFRDRNGLAAASTYQAVIDAERQPELFSNAGGIRPDQPALPMMIDMDDPAHLLRRKLVNAGFTRKRVKDKEASIAALCDTLIDAVCERGECDFVRDLAAPLPMAVIGDMLGVRPEQRDMFLRWSDDLVTFLSSHVSQEDFQITMDAFAAYNDFTRATIAARRADPTDDLVSVLVSSEVDGERLSDDELVMETLLILIGGDETTRHTLSGGTEQLLRNRDQWDLLQRDPSLLPGAIEEMLRWTAPVKNMCRVLTADTEFHGTALCAGEKMMLLFESANFDEAVFCEPEKFDVQRNPNSHLAFGFGTHFCLGNQLARLELSLMTERVLRRLPDLRLVADDSVLPLRPANFVSGLESMPVVFTPSPPLG.

Cys314 lines the heme pocket.

Belongs to the cytochrome P450 family. Requires heme as cofactor.

It carries out the reaction cholest-4-en-3-one + 6 reduced [2Fe-2S]-[ferredoxin] + 3 O2 + 5 H(+) = (25R)-3-oxocholest-4-en-26-oate + 6 oxidized [2Fe-2S]-[ferredoxin] + 4 H2O. The protein operates within steroid metabolism; cholesterol degradation. Functionally, involved in the utilization of cholesterol as the sole carbon and energy source by degrading the side chain during infection. Primarily catalyzes the sequential oxidation of the terminal methyl of cholest-4-en-3-one into (25R)-26-hydroxycholest-4-en-3-one (alcohol), (25R)-26-oxocholest-4-en-3-one (aldehyde), to finally yield the carboxylic acid (25R)-3-oxocholest-4-en-26-oate. Also able to sequentially oxidize cholesterol itself, not only cholest-4-en-3-one. In Mycobacterium tuberculosis (strain CDC 1551 / Oshkosh), this protein is Steroid C26-monooxygenase (cyp142).